A 208-amino-acid polypeptide reads, in one-letter code: MKLLPSVVLKLLLAAVLSALVTGESLEQLRRGLAAGTSNPDPSTGSTDQLLRLGGGRDRKVRDLQEADLDLLRVTLSSKPQALATPSKEEHGKRKKKGKGLGKKRDPCLRKYKDFCIHGECKYVKELRAPSCICHPGYHGERCHGLSLPVENRLYTYDHTTILAVVAVVLSSVCLLVIVGLLMFRYHRRGGYDVENEEKVKLGMTNSH.

Positions Met1–Ala19 are cleaved as a signal peptide. Positions Leu20 to Arg62 are excised as a propeptide. Over Leu20 to Thr160 the chain is Extracellular. The interval Ala34 to Gly55 is disordered. A compositionally biased stretch (polar residues) spans Gly36 to Gln49. O-linked (GalNAc...) threonine glycosylation is found at Thr75 and Thr85. Residues Gln81 to Lys104 are disordered. Residues Lys93–Gly102 are compositionally biased toward basic residues. The 41-residue stretch at Lys104–His144 folds into the EGF-like domain. 3 cysteine pairs are disulfide-bonded: Cys108-Cys121, Cys116-Cys132, and Cys134-Cys143. Residues Pro136 to Leu148 form a toxin-binding domain region. A propeptide spans Pro149–His208 (C-terminal). The helical transmembrane segment at Thr161–Phe184 threads the bilayer. Residues Arg185–His208 lie on the Cytoplasmic side of the membrane.

In terms of assembly, interacts with EGFR and ERBB4. Interacts with FBLN1. O-glycosylated.

It is found in the secreted. The protein localises to the extracellular space. The protein resides in the cell membrane. Growth factor that mediates its effects via EGFR, ERBB2 and ERBB4. Required for normal cardiac valve formation and normal heart function. Promotes smooth muscle cell proliferation. May be involved in macrophage-mediated cellular proliferation. It is mitogenic for fibroblasts, but not endothelial cells. It is able to bind EGF receptor/EGFR with higher affinity than EGF itself and is a far more potent mitogen for smooth muscle cells than EGF. Also acts as a diphtheria toxin receptor. This is Proheparin-binding EGF-like growth factor (HBEGF) from Chlorocebus aethiops (Green monkey).